Reading from the N-terminus, the 280-residue chain is Eukaryotic translation initiation factor 3 subunit F-1 (280 aa).

The MPN domain occupies 8-138 (VRVHPVVLFQ…LRAYVCIQLG (131 aa)).

This sequence belongs to the eIF-3 subunit F family. In terms of assembly, component of the eukaryotic translation initiation factor 3 (eIF-3) complex. The eIF-3 complex interacts with pix.

Its subcellular location is the cytoplasm. Component of the eukaryotic translation initiation factor 3 (eIF-3) complex, which is involved in protein synthesis of a specialized repertoire of mRNAs and, together with other initiation factors, stimulates binding of mRNA and methionyl-tRNAi to the 40S ribosome. The eIF-3 complex specifically targets and initiates translation of a subset of mRNAs involved in cell proliferation. This Drosophila virilis (Fruit fly) protein is Eukaryotic translation initiation factor 3 subunit F-1.